Here is a 234-residue protein sequence, read N- to C-terminus: uncharacterized protein (234 aa).

This is an uncharacterized protein from Methanocaldococcus jannaschii (strain ATCC 43067 / DSM 2661 / JAL-1 / JCM 10045 / NBRC 100440) (Methanococcus jannaschii).